Here is a 492-residue protein sequence, read N- to C-terminus: GDP-fucose protein O-fucosyltransferase 4 (492 aa).

Residues 1–7 are Cytoplasmic-facing; that stretch reads MAAGPIR. Residues 8-24 traverse the membrane as a helical; Signal-anchor for type II membrane protein segment; sequence VVLVLLGVLSVCAASGH. At 25–492 the chain is on the lumenal side; that stretch reads GSVAEREAGG…HEIFMKRQHL (468 aa). Asn-166 is a glycosylation site (N-linked (GlcNAc...) asparagine). Cys-389 and Cys-392 are joined by a disulfide. The N-linked (GlcNAc...) asparagine glycan is linked to Asn-443.

The protein belongs to the glycosyltransferase 10 family.

It localises to the endoplasmic reticulum membrane. It catalyses the reaction L-threonyl-[protein] + GDP-beta-L-fucose = 3-O-(alpha-L-fucosyl)-L-threonyl-[protein] + GDP + H(+). It carries out the reaction L-seryl-[protein] + GDP-beta-L-fucose = 3-O-(alpha-L-fucosyl)-L-seryl-[protein] + GDP + H(+). The protein operates within protein modification; protein glycosylation. Functionally, protein O-fucosyltransferase that specifically catalyzes O-fucosylation of serine or threonine residues in EMI domains of target proteins, such as MMRN1, MMRN2 and EMID1. Attaches fucose through an O-glycosidic linkage. O-fucosylation of EMI domain-containing proteins may be required for facilitating protein folding and secretion. Also shows minor alpha-(1,3)-fucosyltransferase activity toward activity toward biantennary N-glycan acceptors. However, this was tested with a library of synthetic substrates and this activity is unsure in vivo. The polypeptide is GDP-fucose protein O-fucosyltransferase 4 (Homo sapiens (Human)).